An 81-amino-acid chain; its full sequence is Penaeidin-3j (81 aa).

A signal peptide spans 1–19 (MRLVVCLVFLASFALVCQG). Residue Gln20 is modified to Pyrrolidone carboxylic acid. Cystine bridges form between Cys50–Cys65, Cys54–Cys72, and Cys66–Cys73. Ser80 is subject to Serine amide.

The protein belongs to the penaeidin family.

Its subcellular location is the cytoplasmic granule. Its function is as follows. Antibacterial and antifungal activity. Presents chitin-binding activity. The protein is Penaeidin-3j of Penaeus vannamei (Whiteleg shrimp).